Here is a 61-residue protein sequence, read N- to C-terminus: Small ribosomal subunit protein uS14 (61 aa).

Zn(2+)-binding residues include C24, C27, C40, and C43.

It belongs to the universal ribosomal protein uS14 family. Zinc-binding uS14 subfamily. As to quaternary structure, part of the 30S ribosomal subunit. Contacts proteins S3 and S10. Zn(2+) is required as a cofactor.

Binds 16S rRNA, required for the assembly of 30S particles and may also be responsible for determining the conformation of the 16S rRNA at the A site. This chain is Small ribosomal subunit protein uS14, found in Acetivibrio thermocellus (strain ATCC 27405 / DSM 1237 / JCM 9322 / NBRC 103400 / NCIMB 10682 / NRRL B-4536 / VPI 7372) (Clostridium thermocellum).